We begin with the raw amino-acid sequence, 99 residues long: Nucleoid-associated protein MGAS2096_Spy1605 (99 aa).

This sequence belongs to the YbaB/EbfC family. As to quaternary structure, homodimer.

The protein localises to the cytoplasm. It localises to the nucleoid. In terms of biological role, binds to DNA and alters its conformation. May be involved in regulation of gene expression, nucleoid organization and DNA protection. This is Nucleoid-associated protein MGAS2096_Spy1605 from Streptococcus pyogenes serotype M12 (strain MGAS2096).